The primary structure comprises 220 residues: UPF0502 protein VVA1225 (220 aa).

It belongs to the UPF0502 family.

In Vibrio vulnificus (strain YJ016), this protein is UPF0502 protein VVA1225.